The sequence spans 166 residues: Interferon gamma (166 aa).

The first 23 residues, 1-23 (MKYTSYFLALLLCVLLGFSGSYG), serve as a signal peptide directing secretion. Position 24 is a pyrrolidone carboxylic acid (Gln24). Asn39 and Asn106 each carry an N-linked (GlcNAc...) asparagine glycan.

It belongs to the type II (or gamma) interferon family. As to quaternary structure, homodimer. Interacts with IFNGR1 (via extracellular domain); this interaction promotes IFNGR1 dimerization. In terms of tissue distribution, released primarily from activated T lymphocytes.

It is found in the secreted. In terms of biological role, type II interferon produced by immune cells such as T-cells and NK cells that plays crucial roles in antimicrobial, antiviral, and antitumor responses by activating effector immune cells and enhancing antigen presentation. Primarily signals through the JAK-STAT pathway after interaction with its receptor IFNGR1 to affect gene regulation. Upon IFNG binding, IFNGR1 intracellular domain opens out to allow association of downstream signaling components JAK2, JAK1 and STAT1, leading to STAT1 activation, nuclear translocation and transcription of IFNG-regulated genes. Many of the induced genes are transcription factors such as IRF1 that are able to further drive regulation of a next wave of transcription. Plays a role in class I antigen presentation pathway by inducing a replacement of catalytic proteasome subunits with immunoproteasome subunits. In turn, increases the quantity, quality, and repertoire of peptides for class I MHC loading. Increases the efficiency of peptide generation also by inducing the expression of activator PA28 that associates with the proteasome and alters its proteolytic cleavage preference. Up-regulates as well MHC II complexes on the cell surface by promoting expression of several key molecules such as cathepsins B/CTSB, H/CTSH, and L/CTSL. Participates in the regulation of hematopoietic stem cells during development and under homeostatic conditions by affecting their development, quiescence, and differentiation. The sequence is that of Interferon gamma (IFNG) from Bubalus carabanensis (Swamp type water buffalo).